We begin with the raw amino-acid sequence, 450 residues long: Ribulose bisphosphate carboxylase large chain (450 aa).

Lys-4 carries the post-translational modification N6,N6,N6-trimethyllysine. Positions 113 and 163 each coordinate substrate. The active-site Proton acceptor is the Lys-165. Lys-167 provides a ligand contact to substrate. Mg(2+)-binding residues include Lys-191, Asp-193, and Glu-194. Lys-191 carries the post-translational modification N6-carboxylysine. His-284 functions as the Proton acceptor in the catalytic mechanism. Arg-285, His-317, and Ser-369 together coordinate substrate.

It belongs to the RuBisCO large chain family. Type I subfamily. Heterohexadecamer of 8 large chains and 8 small chains; disulfide-linked. The disulfide link is formed within the large subunit homodimers. The cofactor is Mg(2+). The disulfide bond which can form in the large chain dimeric partners within the hexadecamer appears to be associated with oxidative stress and protein turnover.

It localises to the plastid. It is found in the chloroplast. The catalysed reaction is 2 (2R)-3-phosphoglycerate + 2 H(+) = D-ribulose 1,5-bisphosphate + CO2 + H2O. It carries out the reaction D-ribulose 1,5-bisphosphate + O2 = 2-phosphoglycolate + (2R)-3-phosphoglycerate + 2 H(+). In terms of biological role, ruBisCO catalyzes two reactions: the carboxylation of D-ribulose 1,5-bisphosphate, the primary event in carbon dioxide fixation, as well as the oxidative fragmentation of the pentose substrate in the photorespiration process. Both reactions occur simultaneously and in competition at the same active site. This Sedum rubrotinctum (Jelly bean plant) protein is Ribulose bisphosphate carboxylase large chain.